Here is a 349-residue protein sequence, read N- to C-terminus: Dipeptide transport ATP-binding protein DppD (349 aa).

Residues 7–258 (LEVKNLHVNF…PQHPYTWGLL (252 aa)) enclose the ABC transporter domain. 43-50 (GESGSGKS) is a binding site for ATP.

The protein belongs to the ABC transporter superfamily. As to quaternary structure, the complex is composed of two ATP-binding proteins (DppD and DppF), two transmembrane proteins (DppB and DppC) and a solute-binding protein (DppA).

The protein localises to the cell membrane. It carries out the reaction a dipeptide(out) + ATP + H2O = a dipeptide(in) + ADP + phosphate + H(+). Part of the ABC transporter DppABCDF involved in dipeptide transport. Responsible for energy coupling to the transport system. This Lactococcus lactis subsp. cremoris (strain MG1363) protein is Dipeptide transport ATP-binding protein DppD.